We begin with the raw amino-acid sequence, 482 residues long: Pre-glycoprotein polyprotein GP complex (482 aa).

Gly-2 carries N-myristoyl glycine; by host lipidation. Residues 2–17 (GQFISFMQEIPIFLQE) are Extracellular-facing. A helical membrane pass occupies residues 18–32 (ALNIALVAVSLICIV). A topological domain (cytoplasmic) is located at residue Lys-33. Residues 34–53 (GLVNLYRCGLFQLMVFLVLA) traverse the membrane as a helical segment. Extracellular loops occupy residues 54–58 (GRSCS) and 59–421 (EETF…TLVD). Cys-57 provides a ligand contact to Zn(2+). 2 N-linked (GlcNAc...) asparagine; by host glycosylation sites follow: Asn-83 and Asn-95. Disulfide bonds link Cys-92–Cys-224, Cys-134–Cys-162, Cys-205–Cys-211, Cys-269–Cys-282, and Cys-353–Cys-374. N-linked (GlcNAc...) asparagine; by host glycosylation is found at Asn-164 and Asn-176. N-linked (GlcNAc...) asparagine; by host glycans are attached at residues Asn-354, Asn-362, Asn-379, and Asn-384. Residues 422–442 (ICFWSTEFFISTLFLHLIGFP) traverse the membrane as a helical segment. Residues 443–482 (THEHIRGEGCPLPHRLNSMGGCRCGKYLPLKKPTIWHRRH) lie on the Cytoplasmic side of the membrane. Residues His-444, His-446, Cys-452, His-456, Cys-464, Cys-466, and His-482 each contribute to the Zn(2+) site.

This sequence belongs to the arenaviridae GPC protein family. In terms of assembly, homotetramer; disulfide-linked. As to quaternary structure, homotetramer. GP2 homotetramers bind through ionic interactions with GP1 homotetramers to form the GP complex together with the stable signal peptide. The GP-C polyprotein interacts with the host protease MBTPS1/SKI-1 resulting in the polyprotein processing. Post-translationally, specific enzymatic cleavages in vivo yield mature proteins. GP-C polyprotein is cleaved in the endoplasmic reticulum by the host protease MBTPS1. Only cleaved glycoprotein is incorporated into virions. The SSP remains stably associated with the GP complex following cleavage by signal peptidase and plays crucial roles in the trafficking of GP through the secretory pathway. In terms of processing, myristoylation is necessary for GP2-mediated fusion activity.

Its subcellular location is the virion membrane. It is found in the host endoplasmic reticulum membrane. The protein localises to the host Golgi apparatus membrane. The protein resides in the host cell membrane. In terms of biological role, class I viral fusion protein that directs fusion of viral and host endosomal membranes, leading to delivery of the nucleocapsid into the cytoplasm. Membrane fusion is mediated by irreversible conformational changes induced upon acidification in the endosome. Its function is as follows. Stable signal peptide (SSP): cleaved and functions as a signal peptide. In addition, it is also retained as the third component of the GP complex. The SSP is required for efficient glycoprotein expression, post-translational maturation cleavage of GP1 and GP2, glycoprotein transport to the cell surface plasma membrane, formation of infectious virus particles, and acid pH-dependent glycoprotein-mediated cell fusion. Functionally, interacts with the host receptor. This chain is Pre-glycoprotein polyprotein GP complex, found in Artibeus (neotropical fruit bats).